The primary structure comprises 320 residues: Pyrroline-5-carboxylate reductase 2 (320 aa).

N-acetylserine is present on Ser2. Residues 6–11 and Ser34 each bind NADP(+); that span reads IGAGQL. NADPH-binding residues include Ala8, Gln10, Leu11, Ser34, Glu36, Asn56, Val70, Lys71, and Ala97. Residues Asn56, 69–72, and 95–97 contribute to the NADP(+) site; these read AVKP and CAA. An L-proline-binding site is contributed by Glu164. Asn230 contacts NADPH. L-proline-binding residues include Ala237 and Thr238. Over residues 295–305 the composition is skewed to low complexity; it reads PTVSTLTPSSP. Residues 295 to 320 form a disordered region; that stretch reads PTVSTLTPSSPGKLLTRSLALGGKKD. Ser304 is subject to Phosphoserine.

The protein belongs to the pyrroline-5-carboxylate reductase family. Homodecamer; composed of 5 homodimers. Interacts with LTO1.

Its subcellular location is the cytoplasm. It is found in the mitochondrion. The catalysed reaction is L-proline + NADP(+) = (S)-1-pyrroline-5-carboxylate + NADPH + 2 H(+). It catalyses the reaction L-proline + NAD(+) = (S)-1-pyrroline-5-carboxylate + NADH + 2 H(+). It participates in amino-acid biosynthesis; L-proline biosynthesis; L-proline from L-glutamate 5-semialdehyde: step 1/1. Oxidoreductase that catalyzes the last step in proline biosynthesis, which corresponds to the reduction of pyrroline-5-carboxylate to L-proline using NAD(P)H. At physiologic concentrations, has higher specific activity in the presence of NADH. Involved in cellular response to oxidative stress. In some cell types, such as erythrocytes, its primary function may be the generation of NADP(+). This Macaca fascicularis (Crab-eating macaque) protein is Pyrroline-5-carboxylate reductase 2 (PYCR2).